An 864-amino-acid polypeptide reads, in one-letter code: Translation initiation factor IF-2 (864 aa).

The span at 140–171 (DSRSLNTKKENKLKISNKDEQNKKFNQHRESN) shows a compositional bias: basic and acidic residues. Residues 140 to 179 (DSRSLNTKKENKLKISNKDEQNKKFNQHRESNSFDLNHKK) form a disordered region. The region spanning 364–533 (IRAPVVTIMG…LLQAEMLELK (170 aa)) is the tr-type G domain. A G1 region spans residues 373 to 380 (GHVDHGKT). 373–380 (GHVDHGKT) contributes to the GTP binding site. Positions 398–402 (GITQN) are G2. Residues 419-422 (DTPG) are G3. Residues 419 to 423 (DTPGH) and 473 to 476 (NKID) each bind GTP. Positions 473 to 476 (NKID) are G4. The tract at residues 509 to 511 (SAK) is G5.

This sequence belongs to the TRAFAC class translation factor GTPase superfamily. Classic translation factor GTPase family. IF-2 subfamily.

The protein resides in the cytoplasm. In terms of biological role, one of the essential components for the initiation of protein synthesis. Protects formylmethionyl-tRNA from spontaneous hydrolysis and promotes its binding to the 30S ribosomal subunits. Also involved in the hydrolysis of GTP during the formation of the 70S ribosomal complex. This is Translation initiation factor IF-2 from Buchnera aphidicola subsp. Acyrthosiphon pisum (strain 5A).